A 160-amino-acid polypeptide reads, in one-letter code: Large ribosomal subunit protein uL13 (160 aa).

This sequence belongs to the universal ribosomal protein uL13 family. As to quaternary structure, part of the 50S ribosomal subunit.

This protein is one of the early assembly proteins of the 50S ribosomal subunit, although it is not seen to bind rRNA by itself. It is important during the early stages of 50S assembly. The chain is Large ribosomal subunit protein uL13 from Orientia tsutsugamushi (strain Boryong) (Rickettsia tsutsugamushi).